Consider the following 87-residue polypeptide: Small ribosomal subunit protein uS17 (87 aa).

This sequence belongs to the universal ribosomal protein uS17 family. Part of the 30S ribosomal subunit.

Its function is as follows. One of the primary rRNA binding proteins, it binds specifically to the 5'-end of 16S ribosomal RNA. The polypeptide is Small ribosomal subunit protein uS17 (Onion yellows phytoplasma (strain OY-M)).